The sequence spans 385 residues: MDPFRFQVEARAGRARVGRLFTPHGAVETPLFMPVGTAGSVKGLMPKDLEAIGSQVLLANTYHLLLRPGPERVRALGGLHGFAGWKGPWLTDSGGFQVMSLGHMRRIDEEGVVFQSHLDGRLIKLTPERSIAVQEALGADLIMAFDECPPYPSPREYLEASLERTLRWLERSLKAKTRPDQALFGIAQGGTDPELRRRSTLETIRFDLPGYAIGGLAVGEPKEAMFAMVELSTRLLPEDRPRYLMGVGHPEDLVAAMGLGVDLFDCVYPTRTGRFGSALVPEGRLNLKNARFLEDRRPLEEGCDCYTCQTFGRAYLAHLVRAGEMLGGILLSLHNLRHLHRLTEAARQAIREGRYGDFAREFARRRFGREVPPWFREALAAGGHW.

Catalysis depends on Asp92, which acts as the Proton acceptor. Substrate contacts are provided by residues 92–96, Asp146, Gln188, and Gly215; that span reads DSGGF. The segment at 246–252 is RNA binding; the sequence is GVGHPED. Asp265 functions as the Nucleophile in the catalytic mechanism. The segment at 270-274 is RNA binding; important for wobble base 34 recognition; the sequence is TRTGR. Zn(2+) is bound by residues Cys303, Cys305, Cys308, and His334.

The protein belongs to the queuine tRNA-ribosyltransferase family. As to quaternary structure, homodimer. Within each dimer, one monomer is responsible for RNA recognition and catalysis, while the other monomer binds to the replacement base PreQ1. Zn(2+) serves as cofactor.

The catalysed reaction is 7-aminomethyl-7-carbaguanine + guanosine(34) in tRNA = 7-aminomethyl-7-carbaguanosine(34) in tRNA + guanine. It functions in the pathway tRNA modification; tRNA-queuosine biosynthesis. Functionally, catalyzes the base-exchange of a guanine (G) residue with the queuine precursor 7-aminomethyl-7-deazaguanine (PreQ1) at position 34 (anticodon wobble position) in tRNAs with GU(N) anticodons (tRNA-Asp, -Asn, -His and -Tyr). Catalysis occurs through a double-displacement mechanism. The nucleophile active site attacks the C1' of nucleotide 34 to detach the guanine base from the RNA, forming a covalent enzyme-RNA intermediate. The proton acceptor active site deprotonates the incoming PreQ1, allowing a nucleophilic attack on the C1' of the ribose to form the product. After dissociation, two additional enzymatic reactions on the tRNA convert PreQ1 to queuine (Q), resulting in the hypermodified nucleoside queuosine (7-(((4,5-cis-dihydroxy-2-cyclopenten-1-yl)amino)methyl)-7-deazaguanosine). The protein is Queuine tRNA-ribosyltransferase of Thermus thermophilus (strain ATCC BAA-163 / DSM 7039 / HB27).